The sequence spans 358 residues: Alternative oxidase, mitochondrial (358 aa).

The helical transmembrane segment at 152-172 (LIRYVFLESVAGVPGMVAGML) threads the bilayer. Fe cation is bound by residues Glu159, Glu198, and His201. A helical transmembrane segment spans residues 218-238 (MILGAQGVFFNSFFLCYLFSP). Fe cation-binding residues include Glu249, Glu306, and His309.

This sequence belongs to the alternative oxidase family. Requires Fe cation as cofactor.

It localises to the mitochondrion inner membrane. Functionally, catalyzes cyanide-resistant oxygen consumption. May increase respiration when the cytochrome respiratory pathway is restricted, or in response to low temperatures. The polypeptide is Alternative oxidase, mitochondrial (AOX1) (Monilinia fructicola (Brown rot fungus)).